Here is a 156-residue protein sequence, read N- to C-terminus: Ribosomal RNA large subunit methyltransferase H (156 aa).

Residues leucine 73, glycine 104, and 123–128 each bind S-adenosyl-L-methionine; that span reads ISSMTL.

The protein belongs to the RNA methyltransferase RlmH family. Homodimer.

The protein localises to the cytoplasm. The catalysed reaction is pseudouridine(1915) in 23S rRNA + S-adenosyl-L-methionine = N(3)-methylpseudouridine(1915) in 23S rRNA + S-adenosyl-L-homocysteine + H(+). In terms of biological role, specifically methylates the pseudouridine at position 1915 (m3Psi1915) in 23S rRNA. The chain is Ribosomal RNA large subunit methyltransferase H from Burkholderia cenocepacia (strain ATCC BAA-245 / DSM 16553 / LMG 16656 / NCTC 13227 / J2315 / CF5610) (Burkholderia cepacia (strain J2315)).